The following is an 876-amino-acid chain: Alanine--tRNA ligase (876 aa).

Zn(2+) contacts are provided by His568, His572, Cys669, and His673.

It belongs to the class-II aminoacyl-tRNA synthetase family. It depends on Zn(2+) as a cofactor.

It is found in the cytoplasm. It catalyses the reaction tRNA(Ala) + L-alanine + ATP = L-alanyl-tRNA(Ala) + AMP + diphosphate. Catalyzes the attachment of alanine to tRNA(Ala) in a two-step reaction: alanine is first activated by ATP to form Ala-AMP and then transferred to the acceptor end of tRNA(Ala). Also edits incorrectly charged Ser-tRNA(Ala) and Gly-tRNA(Ala) via its editing domain. This is Alanine--tRNA ligase from Sulfurihydrogenibium sp. (strain YO3AOP1).